The following is an 82-amino-acid chain: Translational regulator CsrA (82 aa).

This sequence belongs to the CsrA/RsmA family. Homodimer; the beta-strands of each monomer intercalate to form a hydrophobic core while the alpha-helices form wings that extend away from the core. Each of the alpha-helical wings interacts with an FliW monomer, yielding a FliW-CsrA(2)-FliW complex.

It localises to the cytoplasm. A translational regulator that binds mRNA to regulate translation initiation and/or mRNA stability. Usually binds in the 5'-UTR at or near the Shine-Dalgarno sequence preventing ribosome-binding, thus repressing translation. Its main target seems to be the major flagellin gene, while its function is anatagonized by FliW. In Geobacillus thermodenitrificans (strain NG80-2), this protein is Translational regulator CsrA.